The chain runs to 42 residues: Iota-conotoxin-like R11.16 (42 aa).

Intrachain disulfides connect cysteine 5–cysteine 19, cysteine 12–cysteine 22, cysteine 18–cysteine 27, and cysteine 21–cysteine 36.

The protein belongs to the conotoxin I1 superfamily. As to expression, expressed by the venom duct.

The protein resides in the secreted. Functionally, iota-conotoxins bind to voltage-gated sodium channels (Nav) and act as agonists by shifting the voltage-dependence of activation to more hyperpolarized levels. Produces general excitatory symptoms. This Conus radiatus (Rayed cone) protein is Iota-conotoxin-like R11.16.